A 202-amino-acid chain; its full sequence is Holliday junction resolvase RecU (202 aa).

4 residues coordinate Mg(2+): Thr85, Asp87, Glu100, and Gln119.

It belongs to the RecU family. The cofactor is Mg(2+).

The protein localises to the cytoplasm. The catalysed reaction is Endonucleolytic cleavage at a junction such as a reciprocal single-stranded crossover between two homologous DNA duplexes (Holliday junction).. Its function is as follows. Endonuclease that resolves Holliday junction intermediates in genetic recombination. Cleaves mobile four-strand junctions by introducing symmetrical nicks in paired strands. Promotes annealing of linear ssDNA with homologous dsDNA. Required for DNA repair, homologous recombination and chromosome segregation. This is Holliday junction resolvase RecU from Streptococcus pyogenes serotype M6 (strain ATCC BAA-946 / MGAS10394).